A 68-amino-acid chain; its full sequence is Alpha-conotoxin-like Lt1.2 (68 aa).

An N-terminal signal peptide occupies residues 1-21; the sequence is MGMRMMFIMFMLVVLATTVDT. Positions 22 to 48 are excised as a propeptide; that stretch reads FTSDRALDAMNAAASNKASRLIALAVR. 2 disulfides stabilise this stretch: Cys50–Cys56 and Cys51–Cys64. The interval 52–54 is lacks the Ser-Xaa-Pro motif that is crucial for potent interaction with nAChR; it reads ARA. Gly65 is modified (glycine amide).

The protein belongs to the conotoxin A superfamily. As to expression, expressed by the venom duct.

The protein localises to the secreted. In terms of biological role, alpha-conotoxins act on postsynaptic membranes, they bind to the nicotinic acetylcholine receptors (nAChR) and thus inhibit them. Has a distinct nAChR binding mode from other alpha-conotoxins, due to a different three residue motif (Ala-Xaa-Ala instead of the conserved Ser-Xaa-Pro motif). The sequence is that of Alpha-conotoxin-like Lt1.2 from Conus litteratus (Lettered cone).